A 271-amino-acid polypeptide reads, in one-letter code: Formamidopyrimidine-DNA glycosylase (271 aa).

The active-site Schiff-base intermediate with DNA is proline 2. Glutamate 3 (proton donor) is an active-site residue. The active-site Proton donor; for beta-elimination activity is the lysine 57. Histidine 90, arginine 109, and lysine 151 together coordinate DNA. The FPG-type zinc-finger motif lies at 236–270; it reads HVYGRGGETCTSCGNLLSEIRLGQRTTVFCGICQT. The active-site Proton donor; for delta-elimination activity is the arginine 260.

It belongs to the FPG family. In terms of assembly, monomer. It depends on Zn(2+) as a cofactor.

The enzyme catalyses Hydrolysis of DNA containing ring-opened 7-methylguanine residues, releasing 2,6-diamino-4-hydroxy-5-(N-methyl)formamidopyrimidine.. It catalyses the reaction 2'-deoxyribonucleotide-(2'-deoxyribose 5'-phosphate)-2'-deoxyribonucleotide-DNA = a 3'-end 2'-deoxyribonucleotide-(2,3-dehydro-2,3-deoxyribose 5'-phosphate)-DNA + a 5'-end 5'-phospho-2'-deoxyribonucleoside-DNA + H(+). Functionally, involved in base excision repair of DNA damaged by oxidation or by mutagenic agents. Acts as a DNA glycosylase that recognizes and removes damaged bases. Has a preference for oxidized purines, such as 7,8-dihydro-8-oxoguanine (8-oxoG). Has AP (apurinic/apyrimidinic) lyase activity and introduces nicks in the DNA strand. Cleaves the DNA backbone by beta-delta elimination to generate a single-strand break at the site of the removed base with both 3'- and 5'-phosphates. The protein is Formamidopyrimidine-DNA glycosylase of Shewanella sp. (strain W3-18-1).